The following is a 236-amino-acid chain: tRNA (guanine-N(7)-)-methyltransferase (236 aa).

The S-adenosyl-L-methionine site is built by Glu68, Glu93, Asp120, and Asp143. Residue Asp143 is part of the active site. Residues Lys147, Asp179, and 212 to 215 (TKFE) contribute to the substrate site.

The protein belongs to the class I-like SAM-binding methyltransferase superfamily. TrmB family.

It carries out the reaction guanosine(46) in tRNA + S-adenosyl-L-methionine = N(7)-methylguanosine(46) in tRNA + S-adenosyl-L-homocysteine. It functions in the pathway tRNA modification; N(7)-methylguanine-tRNA biosynthesis. Catalyzes the formation of N(7)-methylguanine at position 46 (m7G46) in tRNA. This Nitrosococcus oceani (strain ATCC 19707 / BCRC 17464 / JCM 30415 / NCIMB 11848 / C-107) protein is tRNA (guanine-N(7)-)-methyltransferase.